The chain runs to 343 residues: Transmembrane protein 120A (343 aa).

Topologically, residues 1–132 (MHPPPPGPLG…KQAKFAYKDE (132 aa)) are cytoplasmic. Residue lysine 130 coordinates CoA. The chain crosses the membrane as a helical span at residues 133 to 152 (YEKFKLYLTIILILISFTCR). At 153–158 (FLLNSR) the chain is on the extracellular side. Residues 159 to 177 (VTDAAFNFLLVWYYCTLTI) form a helical membrane-spanning segment. At 178-190 (RESILINNGSRIK) the chain is on the cytoplasmic side. CoA contacts are provided by serine 187 and arginine 188. The chain crosses the membrane as a helical span at residues 191 to 209 (GWWVFHHYVSTFLSGVMLT). Over 210 to 218 (WPDGLMYQK) the chain is Extracellular. A helical membrane pass occupies residues 219 to 240 (FRNQFLSFSMYQSFVQFLQYYY). CoA is bound by residues glutamine 237, tyrosine 240, glutamine 241, and histidine 283. Residues 241–270 (QSGCLYRLRALGERHTMDLTVEGFQSWMWR) lie on the Cytoplasmic side of the membrane. The helical transmembrane segment at 271–294 (GLTFLLPFLFFGHFWQLFNALTLF) threads the bilayer. Residues 295–304 (NLARDPECKE) are Extracellular-facing. Residues 305 to 330 (WQVLMCGFPFLLLFLGNFFTTLRVVH) traverse the membrane as a helical segment. Over 331–343 (QKFHNQLHGSKKE) the chain is Cytoplasmic. CoA is bound at residue lysine 332.

It belongs to the TMEM120 family. As to quaternary structure, homodimer. Forms heterooligomer with TMEM120B. Interacts with PKD2; TMEM120A inhibits PKD2 channel activity through the physical association of PKD2 with TMEM120A.

It is found in the cell membrane. The protein localises to the nucleus inner membrane. It localises to the endoplasmic reticulum. Multifunctional protein involved in mechanosensation, and plays an essential role in lipid metabolism and adipocyte differentiation. May function as an ion channel involved in sensing mechanical stimuli. Mediates the mechanosensitivity of the PKD2-TMEM120A channel complex through direct physical interaction. TMEM120A seems to affect mechanosensation by inhibiting PIEZO2 channels, possibly by altering cellular lipid content. TMEM120A is structurally similar to a lipid-modifying enzyme, ELOVL7, and contains a bound coenzyme A molecule, which suggests it might function as an enzyme in lipid metabolism. Additionnaly, implicated in innate immune response against Zika virus. Acts as a key activator of the antiviral signaling involving STING1. The sequence is that of Transmembrane protein 120A from Bos taurus (Bovine).